Reading from the N-terminus, the 572-residue chain is DNA polymerase (572 aa).

Residues 1–222 (MPRKMFSCDF…LPMDKEIRRA (222 aa)) form a 3'-5' exonuclease and strand displacement activities region. An interaction with the primer terminal protein region spans residues 56–66 (YFHNLKFDGAF). 2 residues coordinate Mg(2+): Asp142 and Asp166. The tract at residues 223-226 (YRGG) is DNA-binding; Involved in the formation of a stable complex between TP and phi29 DNA polymerase. The initiation, polymerization and pyrophosphorolytic activities stretch occupies residues 227–572 (FTWLNDKYKE…VLVDSVFTIK (346 aa)). Mg(2+)-binding residues include Asp246 and Val247. 5-methyl-UTP contacts are provided by Tyr251, Lys368, and Lys380. Asp453 and Asp455 together coordinate Mg(2+). Asp455 contacts 5-methyl-UTP.

This sequence belongs to the DNA polymerase type-B family. Interacts with the primer terminal protein; this interaction allows the initiation of TP-primed DNA replication at both viral DNA ends. Interacts with DNA. Mg(2+) serves as cofactor.

It catalyses the reaction DNA(n) + a 2'-deoxyribonucleoside 5'-triphosphate = DNA(n+1) + diphosphate. In terms of biological role, polymerase responsible for protein-primed viral DNA replication by strand displacement with high processivity and fidelity. To start replication, the DNA polymerase forms a heterodimer with a free primer terminal protein (TP), recognizes the replication origins at both 5' ends of the linear chromosome, and initiates replication using as primer the OH-group of Ser-232 of the TP. This polymerase possesses three enzymatic activities: DNA synthesis (polymerase), primer terminal protein (TP) deoxynucleotidylation, which is the formation of a covalent linkage (phosphoester) between the hydroxyl group of a specific serine residue in TP and 5'-dAMP, a reaction directed by the second T at the 3' end, and 3' to 5' exonuclease activity. Exonuclease activity has a proofreading purpose. In Bacillus phage B103 (Bacteriophage B103), this protein is DNA polymerase (2).